Consider the following 354-residue polypeptide: Glycine betaine/proline betaine transport system permease protein ProW (354 aa).

The segment at 1-41 (MADQNNPWDTTPAADSAAQSADAWGTPTTAPTDGGGADWLT) is disordered. At 1–99 (MADQNNPWDT…VDYILNGFQQ (99 aa)) the chain is on the cytoplasmic side. A compositionally biased stretch (low complexity) spans 13 to 32 (AADSAAQSADAWGTPTTAPT). A helical membrane pass occupies residues 100–120 (LLLGMPAPVAIIVFALIAWQI). A topological domain (periplasmic) is located at residue Ser-121. A helical membrane pass occupies residues 122–142 (GVGMGVATLVSLIAIGAIGAW). Over 143–148 (SQAMVT) the chain is Cytoplasmic. The region spanning 145 to 324 (AMVTLALVLT…ILAIILDRLT (180 aa)) is the ABC transmembrane type-1 domain. The helical transmembrane segment at 149–169 (LALVLTALLFCIVIGLPLGIW) threads the bilayer. The Periplasmic segment spans residues 170–198 (LARSPRAAKIIRPLLDAMQTTPAFVYLVP). The helical transmembrane segment at 199–219 (IVMLFGIGNVPGVVVTIIFAL) threads the bilayer. Topologically, residues 220–270 (PPIIRLTILGINQVPADLIEASRSFGASPRQMLFKVQLPLAMPTIMAGVNQ) are cytoplasmic. A helical transmembrane segment spans residues 271–291 (TLMLALSMVVIASMIAVGGLG). At 292 to 300 (QMVLRGIGR) the chain is on the periplasmic side. The helical transmembrane segment at 301–321 (LDMGLATVGGVGIVILAIILD) threads the bilayer. The Cytoplasmic segment spans residues 322-354 (RLTQAVGRDSRSRGNRRWYTTGPVGLLTRPFIK).

This sequence belongs to the binding-protein-dependent transport system permease family. CysTW subfamily. In terms of assembly, the complex is composed of two ATP-binding proteins (ProV), two transmembrane proteins (ProW) and a solute-binding protein (ProX).

The protein resides in the cell inner membrane. Part of the ProU ABC transporter complex involved in glycine betaine and proline betaine uptake. Probably responsible for the translocation of the substrate across the membrane. The polypeptide is Glycine betaine/proline betaine transport system permease protein ProW (Escherichia coli (strain K12)).